A 243-amino-acid polypeptide reads, in one-letter code: Putative outer membrane protein RP075 (243 aa).

Residues 1-23 form the signal peptide; the sequence is MLRIVKKLWVILFISNISINSFA.

This sequence belongs to the OmpW/AlkL family.

It is found in the cell outer membrane. This chain is Putative outer membrane protein RP075, found in Rickettsia prowazekii (strain Madrid E).